Consider the following 171-residue polypeptide: MDPNMQNMMSSYLKIKKLVGDEGSDFEEEEEGEDEEEEEQERVVKVNFAESQLKKKKLNLGEGSGGKSGEKHTASGGGVVAQPCCLVENCGADLRNCKKYYQRHRVCEVHAKAPVVSVEGLMQRFCQQCSRFHDLSEFDQTKRSCRRRLAGHNERRRKSSLESHKEGRSPR.

Disordered stretches follow at residues 20–46 and 57–76; these read GDEGSDFEEEEEGEDEEEEEQERVVKV and KLNLGEGSGGKSGEKHTASG. A compositionally biased stretch (acidic residues) spans 22 to 40; it reads EGSDFEEEEEGEDEEEEEQ. Residues 82 to 159 form an SBP-type zinc finger; it reads QPCCLVENCG…AGHNERRRKS (78 aa). Zn(2+) is bound by residues Cys85, Cys90, Cys107, His110, Cys126, Cys129, His133, and Cys145. The Bipartite nuclear localization signal motif lies at 142–158; sequence KRSCRRRLAGHNERRRK. Over residues 149-158 the composition is skewed to basic residues; sequence LAGHNERRRK. The interval 149 to 171 is disordered; sequence LAGHNERRRKSSLESHKEGRSPR. Over residues 159-171 the composition is skewed to basic and acidic residues; it reads SSLESHKEGRSPR.

It localises to the nucleus. Probable transcriptional factor. Binds to the promoter of the SQUAMOSA gene. The chain is Squamosa promoter-binding protein 2 (SBP2) from Antirrhinum majus (Garden snapdragon).